The sequence spans 527 residues: Beta-glucosidase 19 (527 aa).

The N-terminal stretch at 1-21 (MKIPLLGLLLLISLVGSPTRA) is a signal peptide. Positions 52 and 155 each coordinate a beta-D-glucoside. N183 carries N-linked (GlcNAc...) asparagine glycosylation. Residue 200 to 201 (NE) participates in a beta-D-glucoside binding. The active-site Proton donor is the E201. A disulfide bridge connects residues C220 and C231. 2 residues coordinate a beta-D-glucoside: Y345 and E418. Catalysis depends on E418, which acts as the Nucleophile. N462 carries an N-linked (GlcNAc...) asparagine glycan. Residues W469, 476-477 (EW), and F485 each bind a beta-D-glucoside. An N-linked (GlcNAc...) asparagine glycan is attached at N495. Positions 524-527 (HEEL) match the Prevents secretion from ER motif.

Belongs to the glycosyl hydrolase 1 family.

The protein resides in the endoplasmic reticulum lumen. The enzyme catalyses Hydrolysis of terminal, non-reducing beta-D-glucosyl residues with release of beta-D-glucose.. The sequence is that of Beta-glucosidase 19 from Arabidopsis thaliana (Mouse-ear cress).